The chain runs to 211 residues: Shikimate kinase (211 aa).

The disordered stretch occupies residues 1-22 (MHFRYNYRMQRSKTPNTKNSDT). The span at 12-22 (SKTPNTKNSDT) shows a compositional bias: polar residues. 36–41 (GSGKTT) lines the ATP pocket. A Mg(2+)-binding site is contributed by T40. Residues D58, R82, and G104 each coordinate substrate. ATP is bound at residue R142. A substrate-binding site is contributed by R161. Residue Q178 coordinates ATP.

Belongs to the shikimate kinase family. As to quaternary structure, monomer. Requires Mg(2+) as cofactor.

Its subcellular location is the cytoplasm. It carries out the reaction shikimate + ATP = 3-phosphoshikimate + ADP + H(+). Its pathway is metabolic intermediate biosynthesis; chorismate biosynthesis; chorismate from D-erythrose 4-phosphate and phosphoenolpyruvate: step 5/7. Functionally, catalyzes the specific phosphorylation of the 3-hydroxyl group of shikimic acid using ATP as a cosubstrate. This is Shikimate kinase from Nitrosomonas europaea (strain ATCC 19718 / CIP 103999 / KCTC 2705 / NBRC 14298).